A 499-amino-acid polypeptide reads, in one-letter code: Putative alpha-galactosidase 8 (499 aa).

Residues Asn154 and Asn191 are each glycosylated (N-linked (GlcNAc...) asparagine). Residue Asp238 is the Nucleophile of the active site. N-linked (GlcNAc...) asparagine glycosylation is present at Asn256. Catalysis depends on Asp303, which acts as the Proton donor.

This sequence belongs to the glycosyl hydrolase 27 family.

The protein resides in the secreted. It catalyses the reaction Hydrolysis of terminal, non-reducing alpha-D-galactose residues in alpha-D-galactosides, including galactose oligosaccharides, galactomannans and galactolipids.. In terms of biological role, putative alpha-galactosidase involved in the degradation of simple oligosaccharides like melibiose, raffinose and stachyose, and of polymeric galacto(gluco)mannans. This Emericella nidulans (strain FGSC A4 / ATCC 38163 / CBS 112.46 / NRRL 194 / M139) (Aspergillus nidulans) protein is Putative alpha-galactosidase 8 (agl8).